The following is a 262-amino-acid chain: T-cell surface glycoprotein YE1/48 (262 aa).

Topologically, residues 1 to 44 (MSEQEVTYSMVRFHKSAGLQKQVRPEETKGPREAGYRRCSFHWK) are cytoplasmic. The helical; Signal-anchor for type II membrane protein transmembrane segment at 45 to 66 (FIVIALGIFCFLLLVAVSVLAI) threads the bilayer. At 67-262 (KIFQYDQQKN…CGKRLDKFPH (196 aa)) the chain is on the extracellular side. Asn-86, Asn-103, and Asn-123 each carry an N-linked (GlcNAc...) asparagine glycan. The Cell attachment site motif lies at 137–139 (RGD). The 120-residue stretch at 138-257 (GDKVYWFCYG…VFICICGKRL (120 aa)) folds into the C-type lectin domain. 4 disulfides stabilise this stretch: Cys-145–Cys-150, Cys-163–Cys-251, Cys-167–Cys-253, and Cys-232–Cys-245.

As to quaternary structure, homodimer; disulfide-linked. In terms of tissue distribution, high, in T-lymphoma lines, very low in normal lymphocytes.

The protein localises to the membrane. Its function is as follows. Receptor on natural killer (NK) cells for H-2d alleles. Inhibits the activity of NK cells thus preventing cell lysis. This is T-cell surface glycoprotein YE1/48 (Klra1) from Mus musculus (Mouse).